The chain runs to 203 residues: ATP-dependent Clp protease proteolytic subunit 2 (203 aa).

The active-site Nucleophile is the serine 98. The active site involves histidine 123.

Belongs to the peptidase S14 family. As to quaternary structure, fourteen ClpP subunits assemble into 2 heptameric rings which stack back to back to give a disk-like structure with a central cavity, resembling the structure of eukaryotic proteasomes.

Its subcellular location is the cytoplasm. It catalyses the reaction Hydrolysis of proteins to small peptides in the presence of ATP and magnesium. alpha-casein is the usual test substrate. In the absence of ATP, only oligopeptides shorter than five residues are hydrolyzed (such as succinyl-Leu-Tyr-|-NHMec, and Leu-Tyr-Leu-|-Tyr-Trp, in which cleavage of the -Tyr-|-Leu- and -Tyr-|-Trp bonds also occurs).. Cleaves peptides in various proteins in a process that requires ATP hydrolysis. Has a chymotrypsin-like activity. Plays a major role in the degradation of misfolded proteins. The polypeptide is ATP-dependent Clp protease proteolytic subunit 2 (Chlamydia pneumoniae (Chlamydophila pneumoniae)).